A 573-amino-acid polypeptide reads, in one-letter code: Putative inorganic phosphate transporter C1683.01 (573 aa).

The next 6 helical transmembrane spans lie at 48-68 (MMLA…INLV), 100-120 (AASN…GDFF), 124-144 (FVYG…IAMP), 154-174 (MMWV…DYPM), 194-214 (LIFA…IILL), and 230-250 (LEGV…GVLI). Residues 261-270 (FKNSQQLNSG) are compositionally biased toward polar residues. Disordered stretches follow at residues 261 to 280 (FKNS…TSLN) and 290 to 312 (PSVT…RSNT). Transmembrane regions (helical) follow at residues 348–368 (HLLG…GVNL), 397–417 (LIIA…LVEI), 422–442 (WIQL…AGRW), 451–471 (FACF…TTFI), 487–507 (GISA…FNFL), and 510–530 (IIGY…GILF).

The protein belongs to the major facilitator superfamily. Sugar transporter (TC 2.A.1.1) family.

The protein localises to the endoplasmic reticulum membrane. In terms of biological role, high-affinity transporter for external inorganic phosphate. The chain is Putative inorganic phosphate transporter C1683.01 from Schizosaccharomyces pombe (strain 972 / ATCC 24843) (Fission yeast).